A 27-amino-acid chain; its full sequence is MVKTVAVMVGSLRKDSLAHKLMKVLQK.

Homodimer. Requires FAD as cofactor.

The catalysed reaction is 2 a Fe(II)-siderophore + NAD(+) + H(+) = 2 a Fe(III)-siderophore + NADH. In terms of biological role, reductase activity that acts on Fe(3+)-chelates and uses both NADH and NADPH as electron donors. May play a role in iron uptake. This chain is Ferric reductase B (ferB), found in Paracoccus denitrificans.